Consider the following 90-residue polypeptide: Bombyxin B-9 (90 aa).

The signal sequence occupies residues 1-20 (MMKTAVMFILVVVISLTYSS). Cystine bridges form between cysteine 30–cysteine 75, cysteine 42–cysteine 88, and cysteine 74–cysteine 79. A propeptide spans 49–64 (GGAQYAPYWQETYLRS) (c peptide like).

Belongs to the insulin family. In terms of assembly, heterodimer of a B chain and an A chain linked by two disulfide bonds.

It localises to the secreted. In terms of biological role, brain peptide responsible for activation of prothoracic glands to produce ecdysone in insects. The sequence is that of Bombyxin B-9 (BBXB9) from Bombyx mori (Silk moth).